The following is a 54-amino-acid chain: MSPQTETKASVGFKAGVKDYKLTYYTPDYETKDTDILAAFRVTPQXXVPPEEAG.

Residues Met-1 to Ser-2 constitute a propeptide that is removed on maturation. Pro-3 carries the post-translational modification N-acetylproline. The residue at position 14 (Lys-14) is an N6,N6,N6-trimethyllysine.

This sequence belongs to the RuBisCO large chain family. Type I subfamily. In terms of assembly, heterohexadecamer of 8 large chains and 8 small chains.

It is found in the plastid. The protein resides in the chloroplast. It carries out the reaction 2 (2R)-3-phosphoglycerate + 2 H(+) = D-ribulose 1,5-bisphosphate + CO2 + H2O. It catalyses the reaction D-ribulose 1,5-bisphosphate + O2 = 2-phosphoglycolate + (2R)-3-phosphoglycerate + 2 H(+). RuBisCO catalyzes two reactions: the carboxylation of D-ribulose 1,5-bisphosphate, the primary event in carbon dioxide fixation, as well as the oxidative fragmentation of the pentose substrate in the photorespiration process. Both reactions occur simultaneously and in competition at the same active site. The polypeptide is Ribulose bisphosphate carboxylase large chain (rbcL) (Colletia hystrix (Crucifixion thorn)).